We begin with the raw amino-acid sequence, 420 residues long: MDKLVIEGGYPLSGEVVVSGAKNAALPILCASLLSAEPVHLENVPDLQDVRTMLKLLGQMGVQIESGDGRVSLNASKVDNLVAPYEMVKTMRASILVLGPLVARFGHARVSLPGGCAIGARPVDQHIKGLQAMGAEITIEHGFIEARAKRLKGARIVTDMITVTGTENLLMAAVLAEGETVIENAAREPEVGDLAHLLVAMGAKIEGIGTDRLVIQGVDKLHGAKHTVIPDRIEAGTFLCAVAAAGGDVTLRKVRPLILEAVTEKLREAGVTVEEGDDWMRVRMDKRPSAVTFRTSEYPAFPTDMQAQFMALNTIATGTSQVVETIFENRFMHVQELNRLGANITIDGNTALVTGVEQLSGAKVMATDLRASASLVIAALRADGETLIDRIYHLDRGYDRMETKLTALGAKVRRVSGSQA.

Phosphoenolpyruvate is bound at residue 22 to 23 (KN). Position 92 (R92) interacts with UDP-N-acetyl-alpha-D-glucosamine. The Proton donor role is filled by C116. 2-(S-cysteinyl)pyruvic acid O-phosphothioketal is present on C116. UDP-N-acetyl-alpha-D-glucosamine is bound by residues 121 to 125 (RPVDQ), D304, and I326.

Belongs to the EPSP synthase family. MurA subfamily.

Its subcellular location is the cytoplasm. It carries out the reaction phosphoenolpyruvate + UDP-N-acetyl-alpha-D-glucosamine = UDP-N-acetyl-3-O-(1-carboxyvinyl)-alpha-D-glucosamine + phosphate. It functions in the pathway cell wall biogenesis; peptidoglycan biosynthesis. Cell wall formation. Adds enolpyruvyl to UDP-N-acetylglucosamine. The protein is UDP-N-acetylglucosamine 1-carboxyvinyltransferase of Paraburkholderia phytofirmans (strain DSM 17436 / LMG 22146 / PsJN) (Burkholderia phytofirmans).